The primary structure comprises 149 residues: Large ribosomal subunit protein bL9 (149 aa).

It belongs to the bacterial ribosomal protein bL9 family.

In terms of biological role, binds to the 23S rRNA. The chain is Large ribosomal subunit protein bL9 from Leptospira interrogans serogroup Icterohaemorrhagiae serovar copenhageni (strain Fiocruz L1-130).